A 62-amino-acid chain; its full sequence is Large ribosomal subunit protein bL28 (62 aa).

It belongs to the bacterial ribosomal protein bL28 family.

The sequence is that of Large ribosomal subunit protein bL28 from Acholeplasma laidlawii (strain PG-8A).